A 145-amino-acid chain; its full sequence is Small ribosomal subunit protein uS19 (145 aa).

At A2 the chain carries N-acetylalanine. K108 participates in a covalent cross-link: Glycyl lysine isopeptide (Lys-Gly) (interchain with G-Cter in SUMO2).

The protein belongs to the universal ribosomal protein uS19 family. Component of the small ribosomal subunit.

It is found in the cytoplasm. Component of the small ribosomal subunit. The ribosome is a large ribonucleoprotein complex responsible for the synthesis of proteins in the cell. This Oryctolagus cuniculus (Rabbit) protein is Small ribosomal subunit protein uS19 (RPS15).